We begin with the raw amino-acid sequence, 324 residues long: Corticotropin-releasing factor-binding protein (324 aa).

The N-terminal stretch at 1–23 is a signal peptide; that stretch reads MAPTLKLQCHFILVCLLALRGES. Cystine bridges form between Cys-62–Cys-83, Cys-106–Cys-143, Cys-185–Cys-207, Cys-239–Cys-266, and Cys-279–Cys-320. The N-linked (GlcNAc...) asparagine glycan is linked to Asn-206.

It belongs to the CRF-binding protein family.

It localises to the secreted. In terms of biological role, binds CRF and inactivates it. May prevent inappropriate pituitary-adrenal stimulation in pregnancy. The protein is Corticotropin-releasing factor-binding protein (CRHBP) of Ovis aries (Sheep).